The following is a 149-amino-acid chain: FAD synthase (149 aa).

ATP contacts are provided by residues 15 to 16 (VF), 20 to 23 (HVGH), and Asp-101.

It belongs to the archaeal FAD synthase family. In terms of assembly, homodimer. It depends on a divalent metal cation as a cofactor.

It catalyses the reaction FMN + ATP + H(+) = FAD + diphosphate. It functions in the pathway cofactor biosynthesis; FAD biosynthesis; FAD from FMN: step 1/1. In terms of biological role, catalyzes the transfer of the AMP portion of ATP to flavin mononucleotide (FMN) to produce flavin adenine dinucleotide (FAD) coenzyme. In Thermococcus kodakarensis (strain ATCC BAA-918 / JCM 12380 / KOD1) (Pyrococcus kodakaraensis (strain KOD1)), this protein is FAD synthase.